The following is a 290-amino-acid chain: Short neuropeptide F (290 aa).

A signal peptide spans 1–32; it reads MFRFNPQLSHGCALALICCLLNLLMMHQPTNA. A propeptide spanning residues 33-87 is cleaved from the precursor; it reads ELSPVVQGEFFLPILPDDHPPNTDTSFGGPISNLYDNLLQREYAGPVVFPNHQVE. A phenylalanine amide mark is found at Phe-100 and Phe-134. Positions 138–290 are excised as a propeptide; that stretch reads DPTLPQMRRT…IETSSIAPKN (153 aa). A disordered region spans residues 238–290; the sequence is VAGYANDGDDTEAQLDEDTSEFQREARKPMRLRWGRSTGKAPQIETSSIAPKN. Acidic residues predominate over residues 244-257; the sequence is DGDDTEAQLDEDTS. Positions 281–290 are enriched in polar residues; sequence IETSSIAPKN.

Belongs to the NPY family.

The protein localises to the secreted. In terms of biological role, plays a role in controlling food intake and regulating body size. This chain is Short neuropeptide F, found in Drosophila pseudoobscura pseudoobscura (Fruit fly).